A 1054-amino-acid chain; its full sequence is Proteoglycan 4 (1054 aa).

Positions 1–24 (MGWKILPVCLSLLLPVVLIQQVSS) are cleaved as a signal peptide. SMB domains follow at residues 26-69 (DLSS…PELS) and 66-108 (PELS…EEVH). Disulfide bonds link Cys30–Cys34, Cys30–Cys46, Cys34–Cys64, Cys44–Cys46, Cys44–Cys57, Cys50–Cys56, Cys57–Cys64, Cys70–Cys74, Cys70–Cys86, Cys74–Cys104, Cys84–Cys86, Cys84–Cys97, Cys90–Cys96, and Cys97–Cys104. Asn109 is a glycosylation site (N-linked (GlcNAc...) asparagine). A compositionally biased stretch (low complexity) spans 110 to 125 (STSPSSKTAPTPAGAS). Positions 110 to 764 (STSPSSKTAP…PLIPGPPVLF (655 aa)) are disordered. Ser135 carries O-linked (GalNAc...) serine glycosylation. Low complexity predominate over residues 162 to 175 (QESSSSSSSSSSTI). Residues 188–200 (ELQKNPNVKDNKK) are compositionally biased toward basic and acidic residues. Positions 229–238 (TPPPPDPPTT) are enriched in pro residues. 2 O-linked (GalNAc...) threonine glycosylation sites follow: Thr237 and Thr250. Residues 286–295 (TTATNKQSSA) are compositionally biased toward low complexity. Thr301 is a glycosylation site (O-linked (GalNAc...) threonine). Ser302 is a glycosylation site (O-linked (GalNAc...) serine). The segment covering 302-318 (SVKETRSAEKTSDKDVE) has biased composition (basic and acidic residues). Thr306 carries O-linked (GalNAc...) threonine glycosylation. An O-linked (GalNAc...) serine glycan is attached at Ser313. The 1; approximate repeat unit spans residues 317–324 (VEPTSTTP). The tract at residues 317 to 618 (VEPTSTTPKN…TPKKPEPTTT (302 aa)) is 37 X 8 AA repeats of K-X-P-X-P-T-T-X. Polar residues predominate over residues 319 to 328 (PTSTTPKNSA). One copy of the 2; approximate repeat lies at 325–332 (KNSAPTTT). A glycan (O-linked (GalNAc...) serine) is linked at Ser327. The span at 329-339 (PTTTKKPVTTT) shows a compositional bias: low complexity. Residues Thr330, Thr338, Thr354, Thr362, Thr369, Thr377, Thr378, Thr385, Thr386, Thr393, and Thr394 are each glycosylated (O-linked (GalNAc...) threonine). The 3; approximate repeat unit spans residues 333-340 (KKPVTTTK). The stretch at 349–356 (QEPEPTTA) is one 4; approximate repeat. Repeat unit 5 spans residues 357 to 364 (KEPPPTTK). Over residues 364 to 399 (KKPEPTTRKEPEPTTPKEPEPTTPKEPEPTTPKEPE) the composition is skewed to basic and acidic residues. One copy of the 6; approximate repeat lies at 365 to 371 (KPEPTTR). 5 tandem repeats follow at residues 372-379 (KEPEPTTP), 380-387 (KEPEPTTP), 388-395 (KEPEPTTP), 396-403 (KEPEPTTP), and 404-411 (KEPPPTTK). The segment covering 400–426 (PTTPKEPPPTTKKPEPTTPKEPGPTTP) has biased composition (pro residues). The 12; approximate repeat unit spans residues 412-418 (KPEPTTP). Residues Thr416, Thr417, Thr424, Thr432, Thr433, Thr440, Thr441, and Thr448 are each glycosylated (O-linked (GalNAc...) threonine). Tandem repeats lie at residues 419–426 (KEPGPTTP), 427–434 (KEPEPTTT), and 435–442 (KEPEPTTT). Residues 427 to 550 (KEPEPTTTKE…PEPTTPKKPE (124 aa)) show a composition bias toward basic and acidic residues. The stretch at 443-450 (KEPESTTR) is one 16; approximate repeat. Tandem repeats lie at residues 451-458 (KEPEPTTP), 459-466 (KEPEPTTP), 467-474 (KEPEPTTL), 475-482 (KEPEPTTP), 483-490 (KEPEPTTP), 491-498 (KEPEPTTP), 499-506 (KEPEPTTP), 507-514 (KEPEPTTP), 515-522 (KEPEPTTP), 523-530 (KEPEPTTP), 531-538 (KEPEPTTP), 539-546 (KEPEPTTP), 547-554 (KKPEPTTP), 555-562 (KEPVPTTP), 563-570 (KEPEPTTP), 571-578 (KEPEPTTP), 579-586 (KEPEPTTR), 587-594 (KEPEPTTP), 595-602 (KEPEPTTP), 603-610 (KEPEPTTP), and 611-618 (KKPEPTTT). O-linked (GalNAc...) threonine glycans are attached at residues Thr472, Thr480, Thr481, Thr488, Thr489, Thr496, Thr497, Thr504, Thr505, Thr512, Thr520, Thr521, Thr528, and Thr529. The segment covering 551–562 (PTTPKEPVPTTP) has biased composition (pro residues). Residues Thr553, Thr560, Thr561, Thr568, Thr569, Thr576, and Thr577 are each glycosylated (O-linked (GalNAc...) threonine). Positions 563–614 (KEPEPTTPKEPEPTTPKEPEPTTRKEPEPTTPKEPEPTTPKEPEPTTPKKPE) are enriched in basic and acidic residues. Thr592, Thr600, and Thr601 each carry an O-linked (GalNAc...) threonine glycan. Positions 615 to 624 (PTTTSPKTTT) are enriched in low complexity. O-linked (GalNAc...) threonine glycans are attached at residues Thr622, Thr624, Thr628, Thr629, and Thr692. Residues 672–699 (KPTKKPTKAPKKPTSTKKPKTPKTRKPK) are compositionally biased toward basic residues. Residues 700-712 (TTPSPLKTTSATP) are compositionally biased toward low complexity. The segment covering 713 to 735 (ELNTTPLEVMLPTTTIPKQTPNP) has biased composition (polar residues). A disulfide bridge links Cys795 with Cys1053. Hemopexin repeat units follow at residues 797–840 (GKPV…VWGI) and 841–888 (PSPI…FGGL). Asn808 carries an N-linked (GlcNAc...) asparagine glycan. A glycan (O-linked (GalNAc...) threonine) is linked at Thr810. Asn938 is a glycosylation site (N-linked (GlcNAc...) asparagine).

In terms of assembly, homodimer; disulfide-linked. Post-translationally, N-glycosylated. O-glycosylated; contains glycosaminoglycan chondroitin sulfate and keratan sulfate. O-glycosylated with sialylated oligosaccharides which are predominantly represented by the monosialylated core type I structure, NeuNAcalpha2-3Galbeta1-3GalNAc, with smaller amounts of disialylated O-glycans. In terms of processing, the disulfide bond between Cys-795 and Cys-1053 is essential for protein cleavage. Post-translationally, proteolytically cleaved by cathepsin CTSG. As to expression, highly expressed in cartilage, bone and liver and weakly expressed in heart, brain and muscle. Expressed in the surface chondrocytes and in synovial intimal cells. Isoform B is expressed in bone, small intestine, muscle, testis, heart, liver and lung. Isoform C and isoform D are widely expressed.

The protein resides in the secreted. In terms of biological role, plays a role in boundary lubrication within articulating joints. Prevents protein deposition onto cartilage from synovial fluid by controlling adhesion-dependent synovial growth and inhibiting the adhesion of synovial cells to the cartilage surface. The sequence is that of Proteoglycan 4 (Prg4) from Mus musculus (Mouse).